A 514-amino-acid polypeptide reads, in one-letter code: Ribonuclease Y (514 aa).

A helical membrane pass occupies residues 3-23 (YMIIYEIIAGILIVVAILIHF). The KH domain occupies 204–289 (TVHVVTLPND…EMVEKAEKEL (86 aa)). The HD domain occupies 330–423 (VLKHSVEVAY…VQAADAISAA (94 aa)).

The protein belongs to the RNase Y family.

It localises to the cell membrane. In terms of biological role, endoribonuclease that initiates mRNA decay. The polypeptide is Ribonuclease Y (Clostridium kluyveri (strain ATCC 8527 / DSM 555 / NBRC 12016 / NCIMB 10680 / K1)).